Reading from the N-terminus, the 655-residue chain is Integrin beta-5 (655 aa).

Positions 1-234 constitute a VWFA domain; it reads DLSLSMKDDL…QLIINAYNSI (234 aa). Residues 1–575 are Extracellular-facing; that stretch reads DLSLSMKDDL…REPECGNTPN (575 aa). Mg(2+)-binding residues include S3 and S5. Ca(2+) is bound by residues S5, D8, D9, and D40. C58 and C67 are disulfide-bonded. Ca(2+) is bound by residues N98, D100, P102, and E103. E103 lines the Mg(2+) pocket. C115 and C156 are oxidised to a cystine. Residue N203 is glycosylated (N-linked (GlcNAc...) asparagine). Residue G218 participates in Ca(2+) binding. Intrachain disulfides connect C257-C269, C289-C317, C321-C340, C332-C343, C345-C354, C356-C386, C369-C384, C378-C389, C391-C404, C406-C427, C411-C425, C419-C430, and C432-C441. The N-linked (GlcNAc...) asparagine glycan is linked to N316. 4 I-EGF domains span residues 321-355, 356-405, 406-442, and 443-482; these read CSVGLEPNSARCSGTGTYVCGLCECSPGYLGTRCE, CQDG…PFCE, CDNFSCARNKGVLCSGHGECHCGECKCHAGYIGDNCN, and CSTDISTCRGRDGQICSERGHCLCGQCQCTEPGAFGEMCE. An N-linked (GlcNAc...) asparagine glycan is attached at N408. N-linked (GlcNAc...) asparagine glycosylation occurs at N442. Cystine bridges form between C443/C466, C450/C464, C458/C469, C471/C481, C484/C487, C491/C538, C497/C517, C500/C513, and C546/C570. Residues N510 and N561 are each glycosylated (N-linked (GlcNAc...) asparagine). Residues 576 to 598 form a helical membrane-spanning segment; it reads AMTILLAVVGSILLVGLALLAIW. Residues 599 to 655 are Cytoplasmic-facing; sequence KLLVTIHDRREFAKFQSERSRARYEMASNPLYRKPISTHTVDFTFNKFNKSYNGTVD. At S626 the chain carries Phosphoserine.

It belongs to the integrin beta chain family. As to quaternary structure, heterodimer of an alpha and a beta subunit. Beta-5 (ITGB5) associates with alpha-V (ITGAV). Interacts with MYO10. Interacts with DAB2. Integrin ITGAV:ITGB5 interacts with FBLN5 (via N-terminus). ITGAV:ITGB5 interacts with CCN3. Interacts with tensin TNS3; TNS3 also interacts with PEAK1, thus acting as an adapter molecule to bridge the association of PEAK1 with ITGB5.

The protein localises to the cell membrane. Functionally, integrin alpha-V/beta-5 (ITGAV:ITGB5) is a receptor for fibronectin. It recognizes the sequence R-G-D in its ligand. This chain is Integrin beta-5 (ITGB5), found in Papio cynocephalus (Yellow baboon).